Here is an 81-residue protein sequence, read N- to C-terminus: Photosystem I iron-sulfur center (81 aa).

4Fe-4S ferredoxin-type domains are found at residues 2 to 31 and 39 to 68; these read AHSV…MIPW and IASA…VRVY. [4Fe-4S] cluster contacts are provided by C11, C14, C17, C21, C48, C51, C54, and C58.

The eukaryotic PSI reaction center is composed of at least 11 subunits. [4Fe-4S] cluster is required as a cofactor.

It is found in the plastid. Its subcellular location is the chloroplast thylakoid membrane. The enzyme catalyses reduced [plastocyanin] + hnu + oxidized [2Fe-2S]-[ferredoxin] = oxidized [plastocyanin] + reduced [2Fe-2S]-[ferredoxin]. Its function is as follows. Apoprotein for the two 4Fe-4S centers FA and FB of photosystem I (PSI); essential for photochemical activity. FB is the terminal electron acceptor of PSI, donating electrons to ferredoxin. The C-terminus interacts with PsaA/B/D and helps assemble the protein into the PSI complex. Required for binding of PsaD and PsaE to PSI. PSI is a plastocyanin-ferredoxin oxidoreductase, converting photonic excitation into a charge separation, which transfers an electron from the donor P700 chlorophyll pair to the spectroscopically characterized acceptors A0, A1, FX, FA and FB in turn. This Psilotum nudum (Whisk fern) protein is Photosystem I iron-sulfur center.